The chain runs to 557 residues: Dihydroxy-acid dehydratase (557 aa).

C49 is a [2Fe-2S] cluster binding site. Residue D81 participates in Mg(2+) binding. C122 is a [2Fe-2S] cluster binding site. Mg(2+) is bound by residues D123 and K124. K124 is subject to N6-carboxylysine. A [2Fe-2S] cluster-binding site is contributed by C194. Residue E446 participates in Mg(2+) binding. The active-site Proton acceptor is S472.

The protein belongs to the IlvD/Edd family. As to quaternary structure, homodimer. It depends on [2Fe-2S] cluster as a cofactor. The cofactor is Mg(2+).

The enzyme catalyses (2R)-2,3-dihydroxy-3-methylbutanoate = 3-methyl-2-oxobutanoate + H2O. The catalysed reaction is (2R,3R)-2,3-dihydroxy-3-methylpentanoate = (S)-3-methyl-2-oxopentanoate + H2O. It functions in the pathway amino-acid biosynthesis; L-isoleucine biosynthesis; L-isoleucine from 2-oxobutanoate: step 3/4. Its pathway is amino-acid biosynthesis; L-valine biosynthesis; L-valine from pyruvate: step 3/4. Its function is as follows. Functions in the biosynthesis of branched-chain amino acids. Catalyzes the dehydration of (2R,3R)-2,3-dihydroxy-3-methylpentanoate (2,3-dihydroxy-3-methylvalerate) into 2-oxo-3-methylpentanoate (2-oxo-3-methylvalerate) and of (2R)-2,3-dihydroxy-3-methylbutanoate (2,3-dihydroxyisovalerate) into 2-oxo-3-methylbutanoate (2-oxoisovalerate), the penultimate precursor to L-isoleucine and L-valine, respectively. In Prochlorococcus marinus (strain MIT 9215), this protein is Dihydroxy-acid dehydratase.